The sequence spans 415 residues: Mitogen-activated protein kinase kinae MST7 (415 aa).

The disordered stretch occupies residues 1–37; it reads MADPFAPRTMKRRNVKGLALTPAAPKPPPTAENAPIH. The region spanning 61-326 is the Protein kinase domain; sequence LEVIKDLGSG…EELFERDPFV (266 aa). ATP-binding positions include 67-75 and Lys90; that span reads LGSGNGGTV. Positions 363-409 are disordered; that stretch reads DLLRSSDSPTATYHGDDRPLETPTSAYRVDPRRGPAEGSAGLADQVD.

The protein belongs to the protein kinase superfamily. STE Ser/Thr protein kinase family. MAP kinase kinase subfamily. Homodimer. Interacts with the adapter protein MST50. Interacts with TRX2.

It carries out the reaction L-seryl-[protein] + ATP = O-phospho-L-seryl-[protein] + ADP + H(+). The enzyme catalyses L-threonyl-[protein] + ATP = O-phospho-L-threonyl-[protein] + ADP + H(+). Mitogen-activated protein kinase kinase; part of the MST11-MST7-PMK1 MAP kinase (MAPK) cascade that is essential for appressorium formation, penetration and invasive growth. The MST11-MST7-PMK1 MAP kinase cascade transduces signals from the cell surface sensors MDB2 and SHO1 that recognize various surface signals such as surface hydrophobicity, cutin monomers, and rice leaf waxes. MST7 acts as the upstream MAPKK that directly phosphorylates MAP kinase PMK1. The sequence is that of Mitogen-activated protein kinase kinae MST7 from Pyricularia oryzae (strain 70-15 / ATCC MYA-4617 / FGSC 8958) (Rice blast fungus).